The following is a 261-amino-acid chain: Methyl jasmonate esterase 1 (261 aa).

Residues 8–251 (FVLVHGACHG…MFSKPLDLCA (244 aa)) form the AB hydrolase-1 domain. The active-site Acyl-ester intermediate is Ser-82. Catalysis depends on charge relay system residues Asp-211 and His-239.

This sequence belongs to the AB hydrolase superfamily. Methylesterase family. As to quaternary structure, homodimer.

It catalyses the reaction methyl (-)-jasmonate + H2O = jasmonate + methanol + H(+). It carries out the reaction methyl salicylate + H2O = salicylate + methanol + H(+). Its pathway is plant hormone biosynthesis. It participates in lipid metabolism; oxylipin biosynthesis. In terms of biological role, methylesterase that catalyzes the hydrolysis of methyl jasmonate (MeJA) into jasmonate (JA). Can also use methyl salicylate (MeSA) as substrate with a lower efficiency. The polypeptide is Methyl jasmonate esterase 1 (Vitis vinifera (Grape)).